The chain runs to 258 residues: MRLTPLPAFDNNYIWTLIAPDGRAIIVDPGQALPILEAHSKGLIPTAILLTHHHADHIGGVPELLERWPTLPVYAPHDTRIALNYHRIGEGDSLNILGMRFQVIHTPGHTHSHLTFIGNDLLFCGDTLFSLGCGQIFEGTPTQMLASLQRLAALPIQTRVCCGHEYTLSNAAFALHVDPTNTALQKRRQQANAMRLAGLPTLPISLESELNTNPFLRTAAPTIHAATATHLQRTPIDEVEVFATLRHWKNNFPIKNIP.

Histidine 52, histidine 54, aspartate 56, histidine 57, histidine 109, aspartate 126, and histidine 164 together coordinate Zn(2+).

This sequence belongs to the metallo-beta-lactamase superfamily. Glyoxalase II family. In terms of assembly, monomer. The cofactor is Zn(2+).

It carries out the reaction an S-(2-hydroxyacyl)glutathione + H2O = a 2-hydroxy carboxylate + glutathione + H(+). It functions in the pathway secondary metabolite metabolism; methylglyoxal degradation; (R)-lactate from methylglyoxal: step 2/2. Functionally, thiolesterase that catalyzes the hydrolysis of S-D-lactoyl-glutathione to form glutathione and D-lactic acid. The sequence is that of Hydroxyacylglutathione hydrolase from Xylella fastidiosa (strain M23).